A 438-amino-acid polypeptide reads, in one-letter code: MKYFKDIPEVKYEGPQSDNPFAFKYYNPDEIIDGKPLKDHLRFAIAYWHTFCATGSDPFGQPTIVRPWDKFSNRMDNAKARVEAAFEFFELLDVPFFCFHDRDIAPEGENLKESNKNLDEIVSLIKEYLKTSKTKVLWGTANLFSHPRYVHGAATSCNADVFAYAAAQVKKALEVTKELGGENYVFWGGREGYETLLNTDMGLELDNLARFLHMAVEYAKEIGFDGQFLIEPKPKEPTKHQYDFDSAHVYGFLKKYDLDKYFKLNIEVNHATLAGHDFHHELRFARINNMLGSIDANMGDLLLGWDTDQFPTDVRLTTLAMYEVIKAGGFDKGGLNFDAKVRRGSFELEDLVIGHIAGMDAFAKGFKIAYKLVKDGVFDKFIDERYKSYKEGIGAKIVSGEANFKMLEEYALSLDKIENKSGKQELLEMILNKYMFSE.

Mg(2+)-binding residues include D306 and D308.

The protein belongs to the xylose isomerase family. As to quaternary structure, homotetramer. It depends on Mg(2+) as a cofactor.

Its subcellular location is the cytoplasm. The enzyme catalyses alpha-D-xylose = alpha-D-xylulofuranose. This is Xylose isomerase from Caldicellulosiruptor bescii (strain ATCC BAA-1888 / DSM 6725 / KCTC 15123 / Z-1320) (Anaerocellum thermophilum).